A 631-amino-acid polypeptide reads, in one-letter code: 1-deoxy-D-xylulose-5-phosphate synthase (631 aa).

Residues histidine 73 and 114 to 116 (SHA) contribute to the thiamine diphosphate site. Residue aspartate 145 coordinates Mg(2+). Thiamine diphosphate-binding positions include 146-147 (GA), asparagine 175, tyrosine 286, and glutamate 368. Asparagine 175 is a Mg(2+) binding site.

It belongs to the transketolase family. DXPS subfamily. As to quaternary structure, homodimer. Mg(2+) serves as cofactor. Thiamine diphosphate is required as a cofactor.

The catalysed reaction is D-glyceraldehyde 3-phosphate + pyruvate + H(+) = 1-deoxy-D-xylulose 5-phosphate + CO2. Its pathway is metabolic intermediate biosynthesis; 1-deoxy-D-xylulose 5-phosphate biosynthesis; 1-deoxy-D-xylulose 5-phosphate from D-glyceraldehyde 3-phosphate and pyruvate: step 1/1. Functionally, catalyzes the acyloin condensation reaction between C atoms 2 and 3 of pyruvate and glyceraldehyde 3-phosphate to yield 1-deoxy-D-xylulose-5-phosphate (DXP). The polypeptide is 1-deoxy-D-xylulose-5-phosphate synthase (Nocardia farcinica (strain IFM 10152)).